The following is a 480-amino-acid chain: Heparin cofactor 2 (480 aa).

A signal peptide spans 1–19 (MQHRPHLLLISLTIMSVCG). Asn32 is a glycosylation site (N-linked (GlcNAc...) asparagine). 2 repeat units span residues 56-66 (GEEDDDYLDLE) and 70-80 (SEDDDYIDIID). The segment at 56–80 (GEEDDDYLDLEKLLSEDDDYIDIID) is 2 X 11 AA approximate repeats, Asp/Glu-rich (acidic) (hirudin-like). A sulfotyrosine mark is found at Tyr62 and Tyr75. N-linked (GlcNAc...) asparagine glycosylation is present at Asn169. Residues 173 to 193 (KYEILTIHNLFRKLTHRLFRR) are glycosaminoglycan-binding site. N-linked (GlcNAc...) asparagine glycosylation is found at Asn368 and Asn404.

Belongs to the serpin family. In terms of processing, N-glycosylated; different glycan composition appears to lead to two forms of this protein (56 and 60 kDa).

Functionally, thrombin inhibitor activated by the glycosaminoglycans, heparin or dermatan sulfate. In the presence of the latter, HC-II becomes the predominant thrombin inhibitor in place of antithrombin III (AT). The sequence is that of Heparin cofactor 2 (SERPIND1) from Oryctolagus cuniculus (Rabbit).